The sequence spans 582 residues: PCNA-interacting partner (582 aa).

2 stretches are compositionally biased toward polar residues: residues 471–487 (GVNS…SSGN) and 501–510 (KSSSLTGNTS). The segment at 471-514 (GVNSSVGRPTIGTSSGNVHLGRSEKEKVARKSSSLTGNTSSKRK) is disordered.

Belongs to the PARI family. Interacts with RAD51 and PCNA. Interacts with PARP1. Interacts with TASOR.

The protein localises to the cytoplasm. It localises to the nucleus. Functionally, required to suppress inappropriate homologous recombination, thereby playing a central role DNA repair and in the maintenance of genomic stability. Antagonizes homologous recombination by interfering with the formation of the RAD51-DNA homologous recombination structure. Binds single-strand DNA and poly(A) homopolymers. Positively regulate the poly(ADP-ribosyl)ation activity of PARP1; however such function may be indirect. This is PCNA-interacting partner (PARPBP) from Bos taurus (Bovine).